Reading from the N-terminus, the 157-residue chain is ATP synthase subunit b (157 aa).

Residues 7-29 (LISQAIAFSLFILFTARFVWPYL) form a helical membrane-spanning segment.

It belongs to the ATPase B chain family. F-type ATPases have 2 components, F(1) - the catalytic core - and F(0) - the membrane proton channel. F(1) has five subunits: alpha(3), beta(3), gamma(1), delta(1), epsilon(1). F(0) has three main subunits: a(1), b(2) and c(10-14). The alpha and beta chains form an alternating ring which encloses part of the gamma chain. F(1) is attached to F(0) by a central stalk formed by the gamma and epsilon chains, while a peripheral stalk is formed by the delta and b chains.

The protein resides in the cell inner membrane. Functionally, f(1)F(0) ATP synthase produces ATP from ADP in the presence of a proton or sodium gradient. F-type ATPases consist of two structural domains, F(1) containing the extramembraneous catalytic core and F(0) containing the membrane proton channel, linked together by a central stalk and a peripheral stalk. During catalysis, ATP synthesis in the catalytic domain of F(1) is coupled via a rotary mechanism of the central stalk subunits to proton translocation. Component of the F(0) channel, it forms part of the peripheral stalk, linking F(1) to F(0). This is ATP synthase subunit b from Nitrosomonas europaea (strain ATCC 19718 / CIP 103999 / KCTC 2705 / NBRC 14298).